The sequence spans 980 residues: Putative formate dehydrogenase YrhE (980 aa).

The region spanning 5–81 (KSISVRVDGT…GMSIDLSGNR (77 aa)) is the 2Fe-2S ferredoxin-type domain. The [2Fe-2S] cluster site is built by C39, C50, C53, and C65. Positions 81–121 (RVKEAQTEAMDRLLENHLLYCTVCDNNNGNCTLHNTAEMMG) constitute a 4Fe-4S His(Cys)3-ligated-type domain. Residues H97, C101, C104, C111, C153, C156, C159, C163, C196, C199, C202, C206, C270, C273, C277, and C305 each contribute to the [4Fe-4S] cluster site. 4Fe-4S ferredoxin-type domains lie at 144–171 (PFYR…VNET) and 187–216 (EGVP…EKSM). Residues 258 to 980 (MRETRTKKTK…NRPGYVHLTD (723 aa)) form a formate dehydrogenase region. One can recognise a 4Fe-4S Mo/W bis-MGD-type domain in the interval 263 to 319 (TKKTKTVCTFCGVGCSFEVWTKGRDILKIQPVSDAPVNAISTCVKGKFGWDFVNSKE). The tract at residues 944–980 (ETAPLPKTNPRNKKRHPQNGVEAERKWNRPGYVHLTD) is disordered.

This sequence in the C-terminal section; belongs to the prokaryotic molybdopterin-containing oxidoreductase family. Requires [2Fe-2S] cluster as cofactor. [4Fe-4S] cluster serves as cofactor. Mo-bis(molybdopterin guanine dinucleotide) is required as a cofactor.

It carries out the reaction formate + NAD(+) = CO2 + NADH. The protein is Putative formate dehydrogenase YrhE (yrhE) of Bacillus subtilis (strain 168).